Consider the following 342-residue polypeptide: Histidinol-phosphate aminotransferase 2 (342 aa).

Position 206 is an N6-(pyridoxal phosphate)lysine (K206).

This sequence belongs to the class-II pyridoxal-phosphate-dependent aminotransferase family. Histidinol-phosphate aminotransferase subfamily. Requires pyridoxal 5'-phosphate as cofactor.

It catalyses the reaction L-histidinol phosphate + 2-oxoglutarate = 3-(imidazol-4-yl)-2-oxopropyl phosphate + L-glutamate. The protein operates within amino-acid biosynthesis; L-histidine biosynthesis; L-histidine from 5-phospho-alpha-D-ribose 1-diphosphate: step 7/9. The sequence is that of Histidinol-phosphate aminotransferase 2 (hisC2) from Archaeoglobus fulgidus (strain ATCC 49558 / DSM 4304 / JCM 9628 / NBRC 100126 / VC-16).